The sequence spans 467 residues: MAPQLLLCLILTFLWSLPEAESNVFLKSKVANRFLQRTKRANSLVEEFKSGNIERECIEERCSKEEAREVFEDDEKTETFWNVYVDGDQCSSNPCHYRGICKDGIGSYTCTCLSGYEGKNCERVLYKSCRVDNGNCWHFCKSVQNDIQCSCAEGYLLGEDGHSCVAGGNFSCGRNIKTRNKREASLPDFVQSHNATLLKKSDNPSPDIRIVNGMDCKLGECPWQAALVDDKKGVFCGGTILSPIYVLTAAHCINETETISVVVGEIDRSRAETGPLLSVDKVYVHKKFVPPKKSQEFYEKFDLVSYDYDIAIIQMKTPIQFSENVVPACLPTADFANQVLMKQDFGIVSGFGGIFERGPNSKTLKVLKVPYVDRHTCMLSSNFPITPTMFCAGYDTLPQDACQGDSGGPHITAYRDTHFITGIVSWGEGCARKGRYGIYTKLSKFIPWIKRIMRQKLPSTESSTGRL.

The signal sequence occupies residues 1–22 (MAPQLLLCLILTFLWSLPEAES). The propeptide occupies 23 to 40 (NVFLKSKVANRFLQRTKR). A Gla domain is found at 41–86 (ANSLVEEFKSGNIERECIEERCSKEEAREVFEDDEKTETFWNVYVD). Residues Glu-46, Glu-47, Glu-54, Glu-56, Glu-59, Glu-60, Glu-65, Glu-66, Glu-69, and Glu-72 each carry the 4-carboxyglutamate modification. Residues Cys-57 and Cys-62 are joined by a disulfide bond. The EGF-like 1; calcium-binding domain maps to 86–122 (DGDQCSSNPCHYRGICKDGIGSYTCTCLSGYEGKNCE). Intrachain disulfides connect Cys-90/Cys-101, Cys-95/Cys-110, Cys-112/Cys-121, Cys-129/Cys-140, Cys-136/Cys-149, Cys-151/Cys-164, Cys-172/Cys-329, Cys-216/Cys-221, Cys-236/Cys-252, Cys-377/Cys-391, and Cys-402/Cys-430. O-linked (Hex...) serine glycosylation is present at Ser-92. The EGF-like 2 domain occupies 129 to 164 (CRVDNGNCWHFCKSVQNDIQCSCAEGYLLGEDGHSC). A propeptide spans 182 to 209 (REASLPDFVQSHNATLLKKSDNPSPDIR) (activation peptide). Residues 210–454 (IVNGMDCKLG…FIPWIKRIMR (245 aa)) form the Peptidase S1 domain. The Charge relay system role is filled by His-251. Asn-254 carries an N-linked (GlcNAc...) asparagine glycan. The active-site Charge relay system is the Asp-309. Ser-406 serves as the catalytic Charge relay system.

This sequence belongs to the peptidase S1 family. Snake venom subfamily. Heterodimer of a light and a heavy chains; disulfide-linked. Is associated with pseutarin-C non-catalytic subunit (AC Q7SZN0) in a non-covalent manner. In terms of processing, gamma-carboxyglutamate residues are formed by vitamin K dependent carboxylation. These residues are essential for the binding of calcium. In terms of tissue distribution, expressed by the venom gland.

Its subcellular location is the secreted. It carries out the reaction Selective cleavage of Arg-|-Thr and then Arg-|-Ile bonds in prothrombin to form thrombin.. With respect to regulation, activated by calcium and negatively charged phospholipids. Its function is as follows. Snake prothrombin activator that attacks the hemostatic system of prey. This non-catalytic subunit is functionally similar to blood coagulation factor V. It serves as a critical cofactor for the prothrombinase activity of the catalytic subunit, which is similar to the blood coagulation factor X. The complex converts prothrombin to thrombin by sequential cleavage at two positions, Arg-320 followed by Arg-271. Cleavage at Arg-320 produces an active intermediate known as meizothrombin. Meizothrombin is the 'second' substrate for prothrombinase, and it docks in an altered manner to present the second cleavage site (271). Cleavage at Arg-271 releases active thrombin from its pro-fragment. This order of events is reversed if the protease component of prothrombinase is used on its own, suggesting that the 271 site is inherently more accessible to proteolysis. The complex converts prothrombin to thrombin in presence but also in the absence of membrane. The polypeptide is Venom prothrombin activator pseutarin-C catalytic subunit (Pseudonaja textilis (Eastern brown snake)).